We begin with the raw amino-acid sequence, 394 residues long: Actin-related protein 2 (394 aa).

ATP contacts are provided by residues 160-162, 214-218, and 305-310; these read GDG, RMIKE, and GGSTMY.

The protein belongs to the actin family. ARP2 subfamily. Component of the Arp2/3 complex composed of ACTR2/ARP2, ACTR3/ARP3, ARPC1B/p41-ARC, ARPC2/p34-ARC, ARPC3/p21-ARC, ARPC4/p20-ARC and ARPC5/p16-ARC.

It localises to the cytoplasm. The protein resides in the cytoskeleton. Its subcellular location is the cell projection. It is found in the nucleus. In terms of biological role, ATP-binding component of the Arp2/3 complex, a multiprotein complex that mediates actin polymerization upon stimulation by nucleation-promoting factor (NPF). The Arp2/3 complex mediates the formation of branched actin networks in the cytoplasm, providing the force for cell motility. Seems to contact the pointed end of the daughter actin filament. In addition to its role in the cytoplasmic cytoskeleton, the Arp2/3 complex also promotes actin polymerization in the nucleus, thereby regulating gene transcription and repair of damaged DNA. The Arp2/3 complex promotes homologous recombination (HR) repair in response to DNA damage by promoting nuclear actin polymerization, leading to drive motility of double-strand breaks (DSBs). This Gallus gallus (Chicken) protein is Actin-related protein 2 (ACTR2).